The chain runs to 545 residues: Transducer protein Htr7 (545 aa).

The next 3 helical transmembrane spans lie at alanine 10–leucine 30, phenylalanine 44–leucine 64, and proline 80–valine 100. Residues alanine 111–alanine 157 form a disordered region. The segment covering glutamate 123–alanine 157 has biased composition (basic and acidic residues). The region spanning alanine 164–aspartate 217 is the HAMP domain. The Methyl-accepting transducer domain occupies glycine 236–alanine 476. The residue at position 281 (glutamate 281) is a Glutamate methyl ester (Glu). Residues leucine 521–aspartate 545 form a disordered region. Positions glutamate 527–alanine 539 are enriched in low complexity.

It belongs to the methyl-accepting chemotaxis (MCP) protein family. Methylated by CheR.

Its subcellular location is the cell membrane. Its function is as follows. Potentially involved in chemo- or phototactic signal transduction. The polypeptide is Transducer protein Htr7 (htr7) (Halobacterium salinarum (strain ATCC 29341 / DSM 671 / R1)).